The primary structure comprises 193 residues: Interferon lambda-2 (193 aa).

A signal peptide spans 1 to 19 (MLLLLLPLLLAAVLTRTQA). N105 carries an N-linked (GlcNAc...) asparagine glycan.

This sequence belongs to the lambda interferon family.

It localises to the secreted. Its function is as follows. Cytokine with antiviral, antitumour and immunomodulatory activities. Plays a critical role in the antiviral host defense, predominantly in the epithelial tissues. Acts as a ligand for the heterodimeric class II cytokine receptor composed of IL10RB and IFNLR1, and receptor engagement leads to the activation of the JAK/STAT signaling pathway resulting in the expression of IFN-stimulated genes (ISG), which mediate the antiviral state. Has a restricted receptor distribution and therefore restricted targets: is primarily active in epithelial cells and this cell type-selective action is because of the epithelial cell-specific expression of its receptor IFNLR1. Seems not to be essential for early virus-activated host defense in vaginal infection, but plays an important role in Toll-like receptor (TLR)-induced antiviral defense. Plays a significant role in the antiviral immune defense in the intestinal epithelium. Exerts an immunomodulatory effect by up-regulating MHC class I antigen expression. The sequence is that of Interferon lambda-2 (Ifnl2) from Mus musculus (Mouse).